Here is a 77-residue protein sequence, read N- to C-terminus: MSLEDDVKSIIVEQLGVDASEVNENSSFIEDLNADSLDLTELIMTLEEKFNFEISEQDAEQLRTVGDVITYIKTRQG.

Positions 1 to 76 constitute a Carrier domain; the sequence is MSLEDDVKSI…DVITYIKTRQ (76 aa). Ser36 is modified (O-(pantetheine 4'-phosphoryl)serine).

This sequence belongs to the acyl carrier protein (ACP) family. Post-translationally, 4'-phosphopantetheine is transferred from CoA to a specific serine of apo-ACP by AcpS. This modification is essential for activity because fatty acids are bound in thioester linkage to the sulfhydryl of the prosthetic group.

Its subcellular location is the cytoplasm. It functions in the pathway lipid metabolism; fatty acid biosynthesis. In terms of biological role, carrier of the growing fatty acid chain in fatty acid biosynthesis. The protein is Acyl carrier protein of Chlamydia caviae (strain ATCC VR-813 / DSM 19441 / 03DC25 / GPIC) (Chlamydophila caviae).